The following is a 52-amino-acid chain: MVSCFDFFLSLNFGKMAKRFVWRTDKPQADLPQTPNSQVRIVSRDLPRGGNY.

Positions Pro27 to Tyr52 are disordered. Polar residues predominate over residues Leu31 to Arg40. The span at Val42 to Tyr52 shows a compositional bias: basic and acidic residues.

As to expression, expressed in roots. Barely detected in flowers.

Produces a rapid alkalinization of the cellular media and the induction of defense-related genes, including chitinase 1b, chalcone synthase and CYP93A1. Not active in tobacco or Arabidopsis. The receptor for GmPep890 is probably different from the receptor for GmSubPep. The chain is Protein PROPEP890 (PROPEP890) from Glycine max (Soybean).